The sequence spans 242 residues: UPF0309 protein BSUIS_B0903 (242 aa).

An SIS domain is found at 30–214 (AADLIAAAAR…ARLVGEGDAP (185 aa)).

The protein belongs to the UPF0309 family.

This chain is UPF0309 protein BSUIS_B0903, found in Brucella suis (strain ATCC 23445 / NCTC 10510).